The sequence spans 406 residues: NADH-ubiquinone oxidoreductase 49 kDa subunit (406 aa).

It belongs to the complex I 49 kDa subunit family. As to quaternary structure, complex I is composed of 45 different subunits. Component of the iron-sulfur (IP) fragment of the enzyme.

The protein resides in the mitochondrion inner membrane. It catalyses the reaction a ubiquinone + NADH + 5 H(+)(in) = a ubiquinol + NAD(+) + 4 H(+)(out). In terms of biological role, core subunit of the mitochondrial membrane respiratory chain NADH dehydrogenase (Complex I) that is believed to belong to the minimal assembly required for catalysis. Complex I functions in the transfer of electrons from NADH to the respiratory chain. The immediate electron acceptor for the enzyme is believed to be ubiquinone. The polypeptide is NADH-ubiquinone oxidoreductase 49 kDa subunit (nad7) (Dictyostelium discoideum (Social amoeba)).